The primary structure comprises 464 residues: Transcription factor EAT1 (464 aa).

The tract at residues 261-274 (GKGKANFATERERR) is basic motif; degenerate. Residues 261–310 (GKGKANFATERERREQLNVKFRTLRMLFPNPTKNDRASIVGDAIEYIDEL) form the bHLH domain. A helix-loop-helix motif region spans residues 275–310 (EQLNVKFRTLRMLFPNPTKNDRASIVGDAIEYIDEL). The tract at residues 338-357 (QEAAADGESSSMRPVRDDQD) is disordered.

This sequence belongs to the bHLH protein family. In terms of assembly, interacts with TDR.

Its subcellular location is the nucleus. Functionally, transcription factor involved in the regulation of tapetum programmed cell death (PCD) and degradation during male reproductive development. Interacts with TDR and promote tapetal PCD by regulating the expression of RTS, and the two lipid-transfer proteins C4 and C6, which function in microspore development. Acts downstream from and interacts with TDR in the regulation of tapetal PCD. Regulates directly the aspartic protease AP25 and AP37 during tapetal PCD. May not target the cysteine protease CP1. In Oryza sativa subsp. japonica (Rice), this protein is Transcription factor EAT1.